A 64-amino-acid chain; its full sequence is NSVHPCCDPVKCEPREGEHCISGPCCRNCKFLNAGTICKRAMLDGLHDYCTGVTSDCPRNRYNH.

A Disintegrin domain is found at Asn-1–His-64. 4 cysteine pairs are disulfide-bonded: Cys-6/Cys-29, Cys-20/Cys-26, Cys-25/Cys-50, and Cys-38/Cys-57. Positions Met-42–Asp-44 match the Cell attachment site; atypical (MLD) motif.

It belongs to the disintegrin family. Dimeric disintegrin subfamily. Heterodimer; disulfide-linked. In terms of tissue distribution, expressed by the venom gland.

It localises to the secreted. Its function is as follows. Inhibits adhesion of cells expressing alpha-4/beta-1 (ITGA4/ITGB1) and alpha-4/beta-7 (ITGA4/ITGB7) integrins to the natural ligands vascular cell adhesion molecule 1 (VCAM-1) and mucosal addressin cell adhesion molecule 1 (MADCAM-1). The sequence is that of Disintegrin from Echis carinatus (Saw-scaled viper).